A 402-amino-acid chain; its full sequence is Omega-3 fatty acid desaturase fat-1 (402 aa).

Transmembrane regions (helical) follow at residues 79 to 99, 101 to 121, 235 to 255, and 260 to 280; these read LVQDFAALTILYFALPAFEYF, LFGYLVWNIFMGVFGFALFVV, CVISGICCCVCAYIALTIAGS, and FWYYWVPLSFFGLMLVIVTYL.

It belongs to the fatty acid desaturase type 1 family.

Its subcellular location is the membrane. It catalyses the reaction (9Z,12Z)-octadecadienoyl-CoA + 2 Fe(II)-[cytochrome b5] + O2 + 2 H(+) = (9Z,12Z,15Z)-octadecatrienoyl-CoA + 2 Fe(III)-[cytochrome b5] + 2 H2O. The enzyme catalyses (8Z,11Z,14Z)-eicosatrienoyl-CoA + 2 Fe(II)-[cytochrome b5] + O2 + 2 H(+) = (8Z,11Z,14Z,17Z)-eicosatetraenoyl-CoA + 2 Fe(III)-[cytochrome b5] + 2 H2O. It carries out the reaction (5Z,8Z,11Z,14Z)-eicosatetraenoyl-CoA + 2 Fe(II)-[cytochrome b5] + O2 + 2 H(+) = (5Z,8Z,11Z,14Z,17Z)-eicosapentaenoyl-CoA + 2 Fe(III)-[cytochrome b5] + 2 H2O. The catalysed reaction is (7Z,10Z,13Z,16Z)-docosatetraenoyl-CoA + 2 Fe(II)-[cytochrome b5] + O2 + 2 H(+) = (7Z,10Z,13Z,16Z,19Z)-docosapentaenoyl-CoA + 2 Fe(III)-[cytochrome b5] + 2 H2O. It catalyses the reaction (6Z,9Z,12Z)-octadecatrienoyl-CoA + 2 Fe(II)-[cytochrome b5] + O2 + 2 H(+) = (6Z,9Z,12Z,15Z)-octadecatetraenoyl-CoA + 2 Fe(III)-[cytochrome b5] + 2 H2O. Its pathway is lipid metabolism; polyunsaturated fatty acid biosynthesis. Its function is as follows. Omega-3 fatty acid desaturase that recognizes a range of 18- and 20-carbon omega-6 substrates. Introduces a double bond in the fatty acid chain three carbons away from terminal methyl group to biosynthesize n-3 (omega-3) polyunsaturated fatty acids (PUFAs) endogenously (PUFAs are essential for membrane structure and many cellular and physiological processes). Acts on a number of substrates like linoleoyl-CoA ((9Z,12Z)-octadecadienoyl-CoA, 18:2n-6), dihomo-gamma-linolenoyl-CoA ((8Z,11Z,14Z)-eicosatrienoyl-CoA, 20:3n-6), and arachidonoyl-CoA ((5Z,8Z,11Z,14Z)-eicosatetraenoyl-CoA, 20:4n-6), to generate alpha-linolenoyl-CoA ((9Z,12Z,15Z)-octadecatrienoyl-CoA, 18:3n-3), (8Z,11Z,14Z,17Z)-eicosatetraenoyl-CoA (20:4n-3) and (5Z,8Z,11Z,14Z,17Z)-eicosapentaenoyl-CoA (20:5n-3) respectively. Unlike plants, Caenorhabditis elegans desaturases seem to use fatty acyl-CoAs as substrates. This Caenorhabditis elegans protein is Omega-3 fatty acid desaturase fat-1 (fat-1).